The chain runs to 358 residues: Type II methyltransferase M.HpaII (358 aa).

The region spanning 32–356 is the SAM-dependent MTase C5-type domain; sequence FTFIDLFAGI…KKILEKLGNL (325 aa). Residue Cys103 is part of the active site.

The protein belongs to the class I-like SAM-binding methyltransferase superfamily. C5-methyltransferase family. In terms of assembly, monomer.

The catalysed reaction is a 2'-deoxycytidine in DNA + S-adenosyl-L-methionine = a 5-methyl-2'-deoxycytidine in DNA + S-adenosyl-L-homocysteine + H(+). Its function is as follows. A methylase that recognizes the double-stranded sequence 5'-CCGG-3', methylates C-2 on both strands, and protects the DNA from cleavage by the HpaII endonuclease. This chain is Type II methyltransferase M.HpaII, found in Haemophilus parainfluenzae.